A 235-amino-acid chain; its full sequence is Ubiquinone/menaquinone biosynthesis C-methyltransferase UbiE (235 aa).

S-adenosyl-L-methionine-binding residues include Thr59, Asp84, and Ser123.

This sequence belongs to the class I-like SAM-binding methyltransferase superfamily. MenG/UbiE family.

It catalyses the reaction a 2-demethylmenaquinol + S-adenosyl-L-methionine = a menaquinol + S-adenosyl-L-homocysteine + H(+). It carries out the reaction a 2-methoxy-6-(all-trans-polyprenyl)benzene-1,4-diol + S-adenosyl-L-methionine = a 5-methoxy-2-methyl-3-(all-trans-polyprenyl)benzene-1,4-diol + S-adenosyl-L-homocysteine + H(+). The protein operates within quinol/quinone metabolism; menaquinone biosynthesis; menaquinol from 1,4-dihydroxy-2-naphthoate: step 2/2. It participates in cofactor biosynthesis; ubiquinone biosynthesis. Functionally, methyltransferase required for the conversion of demethylmenaquinol (DMKH2) to menaquinol (MKH2) and the conversion of 2-polyprenyl-6-methoxy-1,4-benzoquinol (DDMQH2) to 2-polyprenyl-3-methyl-6-methoxy-1,4-benzoquinol (DMQH2). In Campylobacter jejuni subsp. jejuni serotype O:23/36 (strain 81-176), this protein is Ubiquinone/menaquinone biosynthesis C-methyltransferase UbiE.